A 417-amino-acid polypeptide reads, in one-letter code: Serine--tRNA ligase (417 aa).

232 to 234 lines the L-serine pocket; the sequence is TAE. Residues 263 to 265 and Val-279 each bind ATP; that span reads RRE. Glu-286 provides a ligand contact to L-serine. ATP is bound at residue 350–353; the sequence is EISS. An L-serine-binding site is contributed by Ser-385.

It belongs to the class-II aminoacyl-tRNA synthetase family. Type-1 seryl-tRNA synthetase subfamily. As to quaternary structure, homodimer. The tRNA molecule binds across the dimer.

It is found in the cytoplasm. It catalyses the reaction tRNA(Ser) + L-serine + ATP = L-seryl-tRNA(Ser) + AMP + diphosphate + H(+). It carries out the reaction tRNA(Sec) + L-serine + ATP = L-seryl-tRNA(Sec) + AMP + diphosphate + H(+). Its pathway is aminoacyl-tRNA biosynthesis; selenocysteinyl-tRNA(Sec) biosynthesis; L-seryl-tRNA(Sec) from L-serine and tRNA(Sec): step 1/1. Catalyzes the attachment of serine to tRNA(Ser). Is also able to aminoacylate tRNA(Sec) with serine, to form the misacylated tRNA L-seryl-tRNA(Sec), which will be further converted into selenocysteinyl-tRNA(Sec). This Leptospira interrogans serogroup Icterohaemorrhagiae serovar copenhageni (strain Fiocruz L1-130) protein is Serine--tRNA ligase.